Consider the following 484-residue polypeptide: UDP-N-acetylmuramate--L-alanine ligase (484 aa).

ATP is bound at residue 123 to 129 (GTHGKTT).

It belongs to the MurCDEF family.

Its subcellular location is the cytoplasm. It catalyses the reaction UDP-N-acetyl-alpha-D-muramate + L-alanine + ATP = UDP-N-acetyl-alpha-D-muramoyl-L-alanine + ADP + phosphate + H(+). It participates in cell wall biogenesis; peptidoglycan biosynthesis. Cell wall formation. The protein is UDP-N-acetylmuramate--L-alanine ligase of Pseudomonas fluorescens (strain ATCC BAA-477 / NRRL B-23932 / Pf-5).